Reading from the N-terminus, the 424-residue chain is Glutamyl-tRNA reductase (424 aa).

Substrate is bound by residues 49-52 (TCNR), Ser105, 110-112 (EPQ), and Gln116. Cys50 acts as the Nucleophile in catalysis. Residue 185–190 (GSGETA) coordinates NADP(+).

This sequence belongs to the glutamyl-tRNA reductase family. Homodimer.

The enzyme catalyses (S)-4-amino-5-oxopentanoate + tRNA(Glu) + NADP(+) = L-glutamyl-tRNA(Glu) + NADPH + H(+). Its pathway is porphyrin-containing compound metabolism; protoporphyrin-IX biosynthesis; 5-aminolevulinate from L-glutamyl-tRNA(Glu): step 1/2. Functionally, catalyzes the NADPH-dependent reduction of glutamyl-tRNA(Glu) to glutamate 1-semialdehyde (GSA). The protein is Glutamyl-tRNA reductase of Legionella pneumophila (strain Corby).